We begin with the raw amino-acid sequence, 640 residues long: Large subunit GTPase 1 homolog (640 aa).

One can recognise a CP-type G domain in the interval 165 to 426 (WRQLWRVIER…LCDCPGLVMP (262 aa)). Residue 213–216 (NKAD) participates in GTP binding. Residues 251–341 (AEERGEDAMD…ESTATSSFYN (91 aa)) are disordered. Composition is skewed to acidic residues over residues 253–270 (ERGEDAMDQEDQSDTEEE), 290–304 (EKDENEQDEEEEGED), and 320–331 (ESGDEDHAEENP). Residues 332–341 (ESTATSSFYN) are compositionally biased toward polar residues. Residues 375-382 (GYPNVGKS) and 419-422 (DCPG) each bind GTP. Residues 602 to 640 (GPVEAGKANTEQQAGKPWKKHGNRNKKEKVRRLNKHLDA) form a disordered region. A compositionally biased stretch (basic residues) spans 618-640 (PWKKHGNRNKKEKVRRLNKHLDA).

Belongs to the TRAFAC class YlqF/YawG GTPase family. LSG1 subfamily.

It localises to the cytoplasm. The protein resides in the endoplasmic reticulum. Its subcellular location is the nucleus. The protein localises to the cajal body. It catalyses the reaction GTP + H2O = GDP + phosphate + H(+). Functionally, functions as a GTPase. May act by mediating the release of NMD3 from the 60S ribosomal subunit after export into the cytoplasm during the 60S ribosomal subunit maturation. In Danio rerio (Zebrafish), this protein is Large subunit GTPase 1 homolog.